The following is a 102-amino-acid chain: ATP-dependent Clp protease adapter protein ClpS (102 aa).

The span at 1 to 18 shows a compositional bias: basic and acidic residues; sequence MSQFDHQHLSDTEEKQEL. The disordered stretch occupies residues 1-21; the sequence is MSQFDHQHLSDTEEKQELKPP.

Belongs to the ClpS family. In terms of assembly, binds to the N-terminal domain of the chaperone ClpA.

Its function is as follows. Involved in the modulation of the specificity of the ClpAP-mediated ATP-dependent protein degradation. The protein is ATP-dependent Clp protease adapter protein ClpS of Idiomarina loihiensis (strain ATCC BAA-735 / DSM 15497 / L2-TR).